We begin with the raw amino-acid sequence, 385 residues long: Galactokinase (385 aa).

34 to 37 (EHTD) serves as a coordination point for substrate. ATP is bound at residue 124-130 (SAGLSSS). Residues S130 and E162 each contribute to the Mg(2+) site. D174 functions as the Proton acceptor in the catalytic mechanism. Y223 is a substrate binding site.

The protein belongs to the GHMP kinase family. GalK subfamily.

It localises to the cytoplasm. The catalysed reaction is alpha-D-galactose + ATP = alpha-D-galactose 1-phosphate + ADP + H(+). It functions in the pathway carbohydrate metabolism; galactose metabolism. Functionally, catalyzes the transfer of the gamma-phosphate of ATP to D-galactose to form alpha-D-galactose-1-phosphate (Gal-1-P). The chain is Galactokinase from Pasteurella multocida (strain Pm70).